A 288-amino-acid chain; its full sequence is Light-independent protochlorophyllide reductase iron-sulfur ATP-binding protein (288 aa).

Residues 12 to 17 and Lys41 each bind ATP; that span reads GIGKST. Ser16 is a binding site for Mg(2+). [4Fe-4S] cluster-binding residues include Cys97 and Cys131. 182–183 lines the ATP pocket; it reads NR.

This sequence belongs to the NifH/BchL/ChlL family. In terms of assembly, homodimer. Protochlorophyllide reductase is composed of three subunits; ChlL, ChlN and ChlB. [4Fe-4S] cluster serves as cofactor.

It catalyses the reaction chlorophyllide a + oxidized 2[4Fe-4S]-[ferredoxin] + 2 ADP + 2 phosphate = protochlorophyllide a + reduced 2[4Fe-4S]-[ferredoxin] + 2 ATP + 2 H2O. The protein operates within porphyrin-containing compound metabolism; chlorophyll biosynthesis (light-independent). Functionally, component of the dark-operative protochlorophyllide reductase (DPOR) that uses Mg-ATP and reduced ferredoxin to reduce ring D of protochlorophyllide (Pchlide) to form chlorophyllide a (Chlide). This reaction is light-independent. The L component serves as a unique electron donor to the NB-component of the complex, and binds Mg-ATP. This Synechocystis sp. (strain ATCC 27184 / PCC 6803 / Kazusa) protein is Light-independent protochlorophyllide reductase iron-sulfur ATP-binding protein.